The primary structure comprises 317 residues: Actin-related protein 2/3 complex subunit 2 (317 aa).

Belongs to the ARPC2 family. Component of the Arp2/3 complex composed of arp2, act2, arc1/p41-ARC, arc2/p34-ARC, arc3/p21-ARC, arc4/p20-ARC and arc5/p16-ARC.

Its subcellular location is the cytoplasm. The protein resides in the cytoskeleton. It is found in the actin patch. Functionally, functions as actin-binding component of the Arp2/3 complex which is involved in regulation of actin polymerization and together with an activating nucleation-promoting factor (NPF) mediates the formation of branched actin networks. Seems to contact the mother actin filament. This Schizosaccharomyces pombe (strain 972 / ATCC 24843) (Fission yeast) protein is Actin-related protein 2/3 complex subunit 2 (arc2).